A 78-amino-acid chain; its full sequence is Longicornsin (78 aa).

The N-terminal stretch at M1–S22 is a signal peptide. The propeptide occupies E23–S29. Cystine bridges form between C35-C58, C43-C63, and C47-C65.

Salivary glands (at protein level).

It is found in the secreted. Has antibacterial activity against the Gram-positive bacteria S.aureus ATCC2592 (MIC=0.8 ug/ml), S.aureus 6A (MIC=0.8 ug/ml) and S.aureus 15A (MIC=1.6 ug/ml), and against the Gram-negative bacteria E.coli ATCC 25922 (MIC=3.2 ug/ml), E.coli 23A (MIC=6.4 ug/ml), E.coli 27A (MIC=6.4 ug/ml), P.aeruginosa 3A (MIC=3.2 ug/ml), P.aeruginosa 7A (MIC=0.8 ug/ml) and H.pylori NCTC11637 (MIC=6.4 ug/ml). Has antifungal activity against C.albidus ATCC2002 (MIC=25.6 ug/ml). Very low hemolytic activity against rabbit erythrocytes. The chain is Longicornsin from Haemaphysalis longicornis (Bush tick).